A 302-amino-acid chain; its full sequence is MEPGPDGPAAPGPAAIREGWFRETCSLWPGQALSLQVEQLLHHRRSRYQDILVFRSKTYGNVLVLDGVIQCTERDEFSYQEMIANLPLCSHPNPRKVLIIGGGDGGVLREVVKHPSVESVVQCEIDEDVIEVSKKFLPGMAVGFSSSKLTLHVGDGFEFMKQNQDAFDVIITDSSDPMGPAESLFKESYYQLMKTALKEDGILCCQGECQWLHLDLIKEMRHFCKSLFPVVDYAYCSIPTYPSGQIGFMLCSKNPSTNFREPVQQLTQAQVEQMQLKYYNSDMHRAAFVLPEFTRKALNDIS.

An N-acetylmethionine modification is found at Met1. The region spanning 18-253 (EGWFRETCSL…GQIGFMLCSK (236 aa)) is the PABS domain. Residue Gln49 coordinates S-adenosyl 3-(methylsulfanyl)propylamine. A putrescine-binding site is contributed by Tyr79. S-adenosyl 3-(methylsulfanyl)propylamine is bound by residues Gln80, Asp104, Glu124, 155-156 (DG), and Asp173. Asp173 acts as the Proton acceptor in catalysis. Residues 173–176 (DSSD) and Tyr241 contribute to the putrescine site.

Belongs to the spermidine/spermine synthase family. Homodimer or homotetramer.

It catalyses the reaction S-adenosyl 3-(methylsulfanyl)propylamine + putrescine = S-methyl-5'-thioadenosine + spermidine + H(+). The protein operates within amine and polyamine biosynthesis; spermidine biosynthesis; spermidine from putrescine: step 1/1. Its activity is regulated as follows. The activity is thought to be regulated mainly by the availability of decarboxylated S-adenosylmethionine. In terms of biological role, catalyzes the production of spermidine from putrescine and decarboxylated S-adenosylmethionine (dcSAM). Has a strong preference for putrescine as substrate, and has very low activity towards 1,3-diaminopropane. Has extremely low activity towards spermidine. The protein is Spermidine synthase (Srm) of Mus musculus (Mouse).